A 583-amino-acid polypeptide reads, in one-letter code: uncharacterized protein (583 aa).

The segment covering 1–38 has biased composition (polar residues); the sequence is MGQGESIPSRQIQRDASMQAVSSESENINDSDRQNSGF. Disordered regions lie at residues 1-39, 53-124, 156-197, and 362-452; these read MGQG…SGFS, GLRR…AIPQ, TQNN…TAIG, and NSGS…QTDH. Residues 70-80 are compositionally biased toward basic and acidic residues; sequence GNRDRTTERSA. Low complexity predominate over residues 88 to 102; the sequence is SLLNRNSPSLRSLSP. Composition is skewed to polar residues over residues 156-165, 172-191, 384-408, and 420-452; these read TQNNQSTLAS, VSSS…NLES, LISS…NENV, and ASTA…QTDH. The segment at 525 to 568 adopts an RING-type zinc-finger fold; sequence CLVCLSNFELNDECRRLKQCNHFFHRECIDQWLTSSQNSCPLCR. S580 is subject to Phosphoserine.

The protein resides in the membrane. This is an uncharacterized protein from Schizosaccharomyces pombe (strain 972 / ATCC 24843) (Fission yeast).